The chain runs to 395 residues: Cation channel sperm-associated protein 3 (395 aa).

Residues 1–48 are Cytoplasmic-facing; the sequence is MSQHFHHNPVRVKSGSLFATASEALQARLSKIKRKDKECQAYFRKVIK. Residues 49–71 traverse the membrane as a helical segment; that stretch reads STFFQIVMITTVTTNSFLLVLGT. The Extracellular segment spans residues 72 to 80; the sequence is NYDIQFEFF. The chain crosses the membrane as a helical span at residues 81 to 107; it reads RTFEVSELFFVSVYVCEFLMKVYVDPI. Residue Thr-108 is a topological domain, cytoplasmic. The chain crosses the membrane as a helical span at residues 109–131; it reads YWKDGYNILDVIILIILTIPYLL. At 132–143 the chain is on the extracellular side; that stretch reads RKIKGNHSAYLH. A helical transmembrane segment spans residues 144-160; the sequence is FADGIQSLRILKLISYS. Residues 161 to 168 lie on the Cytoplasmic side of the membrane; that stretch reads RGIRTLII. The helical transmembrane segment at 169 to 195 threads the bilayer; it reads AVGETVYTVASVLTLLFLLMFVFAILG. The Extracellular segment spans residues 196 to 216; the sequence is FCLFGVTDRGDLENWGNLASA. The segment at residues 217 to 236 is an intramembrane region (helical; Pore-forming); that stretch reads FFTLFSLATVDGWTDLQEEL. Residues 237–242 are Extracellular-facing; sequence DKRKFT. The chain crosses the membrane as a helical span at residues 243–268; sequence VSRAFTILFILLASFIFLNMFVGVMI. Topologically, residues 269–395 are cytoplasmic; it reads MHTEDSMKKF…ESSSSLSGLS (127 aa).

This sequence belongs to the cation channel sperm-associated (TC 1.A.1.19) family. Component of the CatSper complex or CatSpermasome composed of the core pore-forming members CATSPER1, CATSPER2, CATSPER3 and CATSPER4 as well as auxiliary members CATSPERB, CATSPERG2, CATSPERD, CATSPERE, CATSPERZ, C2CD6/CATSPERT, SLCO6C1, TMEM249, TMEM262 and EFCAB9. HSPA1 may be an additional auxiliary complex member. The core complex members CATSPER1, CATSPER2, CATSPER3 and CATSPER4 form a heterotetrameric channel. The auxiliary CATSPERB, CATSPERG2, CATSPERD and CATSPERE subunits form a pavilion-like structure over the pore which stabilizes the complex through interactions with CATSPER4, CATSPER3, CATSPER1 and CATSPER2 respectively. SLCO6C1 interacts with CATSPERE and TMEM262/CATSPERH interacts with CATSPERB, further stabilizing the complex. C2CD6/CATSPERT interacts at least with CATSPERD and is required for targeting the CatSper complex in the flagellar membrane. In terms of tissue distribution, testis-specific.

The protein resides in the cell projection. The protein localises to the cilium. It is found in the flagellum membrane. The catalysed reaction is Ca(2+)(in) = Ca(2+)(out). With respect to regulation, in contrast to the human ortholog, not activated by progesterone. Activated by intracellular alkalinization. Pore-forming subunit of the CatSper complex, a sperm-specific voltage-gated calcium channel that plays a central role in sperm cell hyperactivation. Controls calcium entry to mediate the hyperactivated motility, a step needed for sperm motility which is essential late in the preparation of sperm for fertilization. The chain is Cation channel sperm-associated protein 3 (Catsper3) from Mus musculus (Mouse).